The primary structure comprises 348 residues: Holliday junction branch migration complex subunit RuvB (348 aa).

Residues 1–10 (MAIVSSNAGS) are compositionally biased toward polar residues. The segment at 1–41 (MAIVSSNAGSSAPRREPVLDAQPLPEESSGRPDDGLRPKRL) is disordered. The tract at residues 13 to 197 (PRREPVLDAQ…FGLIQRLEFY (185 aa)) is large ATPase domain (RuvB-L). The segment covering 28 to 41 (SSGRPDDGLRPKRL) has biased composition (basic and acidic residues). ATP is bound by residues Leu-36, Arg-37, Gly-78, Lys-81, Thr-82, Thr-83, Arg-187, Tyr-197, and Arg-234. Thr-82 is a binding site for Mg(2+). A small ATPAse domain (RuvB-S) region spans residues 198–269 (GQEDLEAIVS…LVSQALSLHR (72 aa)). The head domain (RuvB-H) stretch occupies residues 272–348 (HRGLDAGDRR…RAHLREQEVA (77 aa)). DNA is bound by residues Arg-327 and Arg-332.

Belongs to the RuvB family. Homohexamer. Forms an RuvA(8)-RuvB(12)-Holliday junction (HJ) complex. HJ DNA is sandwiched between 2 RuvA tetramers; dsDNA enters through RuvA and exits via RuvB. An RuvB hexamer assembles on each DNA strand where it exits the tetramer. Each RuvB hexamer is contacted by two RuvA subunits (via domain III) on 2 adjacent RuvB subunits; this complex drives branch migration. In the full resolvosome a probable DNA-RuvA(4)-RuvB(12)-RuvC(2) complex forms which resolves the HJ.

It localises to the cytoplasm. The enzyme catalyses ATP + H2O = ADP + phosphate + H(+). The RuvA-RuvB-RuvC complex processes Holliday junction (HJ) DNA during genetic recombination and DNA repair, while the RuvA-RuvB complex plays an important role in the rescue of blocked DNA replication forks via replication fork reversal (RFR). RuvA specifically binds to HJ cruciform DNA, conferring on it an open structure. The RuvB hexamer acts as an ATP-dependent pump, pulling dsDNA into and through the RuvAB complex. RuvB forms 2 homohexamers on either side of HJ DNA bound by 1 or 2 RuvA tetramers; 4 subunits per hexamer contact DNA at a time. Coordinated motions by a converter formed by DNA-disengaged RuvB subunits stimulates ATP hydrolysis and nucleotide exchange. Immobilization of the converter enables RuvB to convert the ATP-contained energy into a lever motion, pulling 2 nucleotides of DNA out of the RuvA tetramer per ATP hydrolyzed, thus driving DNA branch migration. The RuvB motors rotate together with the DNA substrate, which together with the progressing nucleotide cycle form the mechanistic basis for DNA recombination by continuous HJ branch migration. Branch migration allows RuvC to scan DNA until it finds its consensus sequence, where it cleaves and resolves cruciform DNA. This chain is Holliday junction branch migration complex subunit RuvB, found in Parasynechococcus marenigrum (strain WH8102).